The sequence spans 447 residues: Argininosuccinate synthase (447 aa).

ATP-binding positions include 17 to 25 (AFSGGLDTS) and Ala43. Tyr99 is a binding site for L-citrulline. Residues Gly129 and Thr131 each coordinate ATP. The L-aspartate site is built by Thr131, Asn135, and Asp136. Asn135 provides a ligand contact to L-citrulline. Residue Asp136 coordinates ATP. L-citrulline-binding residues include Arg139 and Ser192. Asp194 serves as a coordination point for ATP. 3 residues coordinate L-citrulline: Thr201, Glu203, and Glu280.

It belongs to the argininosuccinate synthase family. Type 2 subfamily. Homotetramer.

It is found in the cytoplasm. The enzyme catalyses L-citrulline + L-aspartate + ATP = 2-(N(omega)-L-arginino)succinate + AMP + diphosphate + H(+). It functions in the pathway amino-acid biosynthesis; L-arginine biosynthesis; L-arginine from L-ornithine and carbamoyl phosphate: step 2/3. This chain is Argininosuccinate synthase, found in Escherichia coli O1:K1 / APEC.